We begin with the raw amino-acid sequence, 149 residues long: Large ribosomal subunit protein uL15A (149 aa).

Residues 21–40 (RIGKHRKQRGGRGNAGGQHH) are disordered.

It belongs to the universal ribosomal protein uL15 family. Component of the large ribosomal subunit.

The protein localises to the cytoplasm. It localises to the cytosol. Its subcellular location is the endoplasmic reticulum. Functionally, component of the large ribosomal subunit. The ribosome is a large ribonucleoprotein complex responsible for the synthesis of proteins in the cell. The polypeptide is Large ribosomal subunit protein uL15A (rpl27a-1) (Entamoeba histolytica (strain ATCC 30459 / HM-1:IMSS / ABRM)).